A 593-amino-acid chain; its full sequence is High affinity cGMP-specific 3',5'-cyclic phosphodiesterase 9A (593 aa).

Residues 87–141 form a disordered region; that stretch reads SAGVEDKRTTSRGQSAERPLRDRRVVGLEQPRREGAFESGQVEPRPREPQGCYQE. Residues 104-122 show a composition bias toward basic and acidic residues; sequence RPLRDRRVVGLEQPRREGA. In terms of domain architecture, PDEase spans 236–557; it reads PRRDVPTYPK…DRYEELKRID (322 aa). H312 (proton donor) is an active-site residue. 3',5'-cyclic GMP is bound at residue 312–316; it reads HNFRH. 3 residues coordinate Zn(2+): H316, H352, and D353. Residue D353 coordinates 3',5'-cyclic GMP. Position 353 (D353) interacts with Mg(2+). S379 is modified (phosphoserine). 3',5'-cyclic GMP-binding positions include D462, Y484, and 512–513; that span reads AQ. Zn(2+) is bound at residue D462. The disordered stretch occupies residues 564 to 593; the sequence is QKKTDSLTSGATEKSRERSRDVKNSEGDCA. The span at 576 to 593 shows a compositional bias: basic and acidic residues; the sequence is EKSRERSRDVKNSEGDCA.

The protein belongs to the cyclic nucleotide phosphodiesterase family. PDE9 subfamily. As to quaternary structure, homodimer. Zn(2+) is required as a cofactor. Mg(2+) serves as cofactor. Expressed in all tissues examined (testis, brain, small intestine, skeletal muscle, heart, lung, thymus, spleen, placenta, kidney, liver, pancreas, ovary and prostate) except blood. Highest levels in brain, heart, kidney, spleen, prostate and colon. Isoform PDE9A12 is found in prostate. In brain, present in the cortex, cerebellum, and subiculum (at protein level). In heart, primarily localizes to myocytes.

It is found in the cell projection. The protein localises to the ruffle membrane. Its subcellular location is the cytoplasm. It localises to the perinuclear region. The protein resides in the golgi apparatus. It is found in the endoplasmic reticulum. The protein localises to the cell membrane. Its subcellular location is the sarcolemma. It carries out the reaction 3',5'-cyclic GMP + H2O = GMP + H(+). Its pathway is purine metabolism; 3',5'-cyclic GMP degradation; GMP from 3',5'-cyclic GMP: step 1/1. Its activity is regulated as follows. Inhibited by zaprinast; inhibitor is however not specific to PDE9A. Specifically inhibited by BAY-73-6691 (1-(2-chlorophenyl)-6-((2R)-3,3,3- trifluoro-2-methylpropyl)-1,5-dihydro-4H-pyrazolo(3,4-d)pyrimidine-4-one). BAY-73-9961 has two enantiomers, (R) and (S), due to the presence of a chiral center, and both forms vary in their pattern of interaction. Specifically inhibited by PF-4181366 (4H-Pyrazolo[3,4-d]pyrimidin-4-one, 1- cyclopentyl-1,5-dihydro-6-[(3S,4S)-4-methyl- 1-(6-quinoxalinylmethyl)-3-pyrrolidinyl]-one). Specifically inhibited by PF-4449613 ((R)-6-(1-(3-phenoxyazetidin-1-yl)ethyl)-1-(tetrahydro-2H-pyran-4-yl)-1H-pyrazolo[3,4-d]pyrimidin- 4(5H)-one). Specifically inhibited by inhibitor 28 (2-((1-(2-Chlorophenyl)-4-hydroxy-1Hpyrazolo[ 3,4-d]pyrimidin-6-yl)amino)-N-(4- methoxyphenyl)propanamide): inhibitor forms a hydrogen bond with Tyr-484 and Gln-513. Specifically inhibited by 1-Cyclopentyl-6-[(1r)-1-(3-phenoxyazetidin- 1-Yl)ethyl]-1,5-dihydro-4h-pyrazolo[3,4-D] pyrimidin-4-one: inhibitor forms a hydrogen bond with Tyr-484 and Gln-513. Functionally, specifically hydrolyzes the second messenger cGMP, which is a key regulator of many important physiological processes. Highly specific: compared to other members of the cyclic nucleotide phosphodiesterase family, has the highest affinity and selectivity for cGMP. Specifically regulates natriuretic-peptide-dependent cGMP signaling in heart, acting as a regulator of cardiac hypertrophy in myocytes and muscle. Does not regulate nitric oxide-dependent cGMP in heart. Additional experiments are required to confirm whether its ability to hydrolyze natriuretic-peptide-dependent cGMP is specific to heart or is a general feature of the protein. In brain, involved in cognitive function, such as learning and long-term memory. The protein is High affinity cGMP-specific 3',5'-cyclic phosphodiesterase 9A of Homo sapiens (Human).